We begin with the raw amino-acid sequence, 608 residues long: Dolichyl-diphosphooligosaccharide--protein glycosyltransferase subunit 1 (608 aa).

The N-terminal stretch at 1-24 (MEAPAVCLLPLLLLLWAWAPAPGR) is a signal peptide. The Lumenal segment spans residues 25 to 435 (ASPEALPLVN…VVHYTFNKVL (411 aa)). Residue Lys-188 is modified to N6-acetyllysine. Asn-300 carries N-linked (GlcNAc...) asparagine glycosylation. The helical transmembrane segment at 436-456 (MLQEPLLVVAAFYILFFTVIV) threads the bilayer. Topologically, residues 457–607 (YVRLDFSITK…VTKIDHILDA (151 aa)) are cytoplasmic. At Lys-539 the chain carries N6-acetyllysine; alternate. A Glycyl lysine isopeptide (Lys-Gly) (interchain with G-Cter in SUMO2); alternate cross-link involves residue Lys-539.

This sequence belongs to the OST1 family. As to quaternary structure, component of the oligosaccharyltransferase (OST) complex. OST exists in two different complex forms which contain common core subunits RPN1, RPN2, OST48, OST4, DAD1 and TMEM258, either STT3A or STT3B as catalytic subunits, and form-specific accessory subunits. STT3A complex assembly occurs through the formation of 3 subcomplexes. Subcomplex 1 contains RPN1 and TMEM258, subcomplex 2 contains the STT3A-specific subunits STT3A, DC2/OSTC, and KCP2 as well as the core subunit OST4, and subcomplex 3 contains RPN2, DAD1, and OST48. The STT3A complex can form stable complexes with the Sec61 complex or with both the Sec61 and TRAP complexes. Interacts with TMEM35A/NACHO. Post-translationally, ubiquitinated by the ECS(ASB11) complex. In terms of processing, ufmylated by UFL1 in response to endoplasmic reticulum stress, promoting reticulophagy of endoplasmic reticulum sheets. In terms of tissue distribution, detected in liver (at protein level).

Its subcellular location is the endoplasmic reticulum membrane. Its pathway is protein modification; protein glycosylation. Functionally, subunit of the oligosaccharyl transferase (OST) complex that catalyzes the initial transfer of a defined glycan (Glc(3)Man(9)GlcNAc(2) in eukaryotes) from the lipid carrier dolichol-pyrophosphate to an asparagine residue within an Asn-X-Ser/Thr consensus motif in nascent polypeptide chains, the first step in protein N-glycosylation. N-glycosylation occurs cotranslationally and the complex associates with the Sec61 complex at the channel-forming translocon complex that mediates protein translocation across the endoplasmic reticulum (ER). All subunits are required for a maximal enzyme activity. The chain is Dolichyl-diphosphooligosaccharide--protein glycosyltransferase subunit 1 from Sus scrofa (Pig).